The sequence spans 171 residues: uncharacterized protein (171 aa).

Positions 1–24 are cleaved as a signal peptide; the sequence is MIFDSLTMTQSSLSLLLLTGAIFS. Residues 25–70 are Extracellular-facing; it reads ISALYLTLFHRCATFSATSDLFLLVPLKFVSRDINDRLKTHYHHSC. The helical transmembrane segment at 71–91 threads the bilayer; it reads LGSPFLCIIFLFISPLLNYHF. Topologically, residues 92–140 are cytoplasmic; the sequence is RSLVRPPKIHQKGSIPTLTKNAETRCSHHLKQAAATGEVCKVVVIIKGH. A helical membrane pass occupies residues 141–161; that stretch reads ILKDCSIFFFIIFPLIYPLFI. The Extracellular segment spans residues 162–171; sequence NCSSKYNGLQ.

Its subcellular location is the membrane. This is an uncharacterized protein from Saccharomyces cerevisiae (strain ATCC 204508 / S288c) (Baker's yeast).